We begin with the raw amino-acid sequence, 124 residues long: Fluoride-specific ion channel FluC (124 aa).

4 helical membrane-spanning segments follow: residues 4 to 24, 32 to 52, 67 to 87, and 96 to 116; these read IVAI…LAGW, GFPY…GLIM, IGLT…SYET, and FITA…CTWL. Positions 75 and 78 each coordinate Na(+).

It belongs to the fluoride channel Fluc/FEX (TC 1.A.43) family.

The protein localises to the cell inner membrane. It catalyses the reaction fluoride(in) = fluoride(out). Its activity is regulated as follows. Na(+) is not transported, but it plays an essential structural role and its presence is essential for fluoride channel function. In terms of biological role, fluoride-specific ion channel. Important for reducing fluoride concentration in the cell, thus reducing its toxicity. The sequence is that of Fluoride-specific ion channel FluC from Geobacter metallireducens (strain ATCC 53774 / DSM 7210 / GS-15).